A 370-amino-acid chain; its full sequence is Selenide, water dikinase 2 (370 aa).

Residue Sec-24 is part of the active site. A non-standard amino acid (selenocysteine) is located at residue Sec-24. ATP contacts are provided by residues Lys-27, 55 to 57, Asp-76, and Asp-99; that span reads GMD. Asp-57 lines the Mg(2+) pocket. Mg(2+) is bound by residues Asp-99 and Asp-258.

This sequence belongs to the selenophosphate synthase 1 family. Class I subfamily. In terms of assembly, homodimer. The cofactor is Mg(2+). First expressed in the midgut anlagen with subsequent expression in a variety of tissues including the gut and nervous system.

The catalysed reaction is hydrogenselenide + ATP + H2O = selenophosphate + AMP + phosphate + 2 H(+). In terms of biological role, synthesizes selenophosphate from selenide and ATP. This chain is Selenide, water dikinase 2 (Sps2), found in Drosophila melanogaster (Fruit fly).